We begin with the raw amino-acid sequence, 800 residues long: Calmodulin-sensitive adenylate cyclase (800 aa).

The signal sequence occupies residues methionine 1–alanine 33. The ATLF-like domain maps to lysine 60 to lysine 273. The segment at aspartate 294–asparagine 349 is catalytic CA1. The catalytic CB stretch occupies residues valine 350 to threonine 489. The Proton acceptor role is filled by histidine 351. A catalytic CA2 region spans residues alanine 490–lysine 622. Mg(2+) contacts are provided by aspartate 491 and aspartate 493. 3',5'-cyclic AMP is bound by residues threonine 548 and histidine 577–threonine 579. Histidine 577 is a Mg(2+) binding site. The interaction with calmodulin stretch occupies residues aspartate 623 to lysine 800.

This sequence belongs to the adenylyl cyclase class-2 family. As to quaternary structure, interacts (via ATLF domain) with the cleaved form of protective antigen (PA-63) anthrax toxin; interaction is required for EF translocation into the host cytoplasm. It depends on Ca(2+) as a cofactor.

It localises to the secreted. Its subcellular location is the host cytoplasm. It is found in the host cytosol. The catalysed reaction is ATP = 3',5'-cyclic AMP + diphosphate. With respect to regulation, host calmodulin is an absolute requirement for its activation. Inhibited by ethyl 5-aminopyrazolo[1,5-a]quinazoline-3-carboxylate. Functionally, edema factor (EF), which constitutes one of the three proteins composing the anthrax toxin, causes edema in the host. Acts as a calmodulin-dependent adenylyl cyclase by converting ATP to cAMP, leading to dramatic elevation of intracellular cAMP levels in the host, thereby causing edema. EF is not toxic by itself and only acts as an edema factor when associated with protective antigen (PA) to form the edema toxin (EdTx). Required for the survival of germinated spores within macrophages at the early stages of infection. The polypeptide is Calmodulin-sensitive adenylate cyclase (cya) (Bacillus anthracis).